Here is a 221-residue protein sequence, read N- to C-terminus: Josephin-like protein (221 aa).

The segment at 1–37 (MESPSARTLGNSLGDDSGNGNENGNGSGNGNTTMMPH) is disordered. Positions 9–20 (LGNSLGDDSGNG) are enriched in low complexity. The Josephin domain maps to 36-214 (PHGIYHERQT…DCKDKSQQRW (179 aa)). Cys49 acts as the Nucleophile in catalysis. His152 serves as the catalytic Proton acceptor.

It catalyses the reaction Thiol-dependent hydrolysis of ester, thioester, amide, peptide and isopeptide bonds formed by the C-terminal Gly of ubiquitin (a 76-residue protein attached to proteins as an intracellular targeting signal).. In terms of biological role, may act as a deubiquitinating enzyme. The polypeptide is Josephin-like protein (Drosophila melanogaster (Fruit fly)).